The sequence spans 416 residues: Gamma-glutamyl phosphate reductase (416 aa).

It belongs to the gamma-glutamyl phosphate reductase family.

It is found in the cytoplasm. It carries out the reaction L-glutamate 5-semialdehyde + phosphate + NADP(+) = L-glutamyl 5-phosphate + NADPH + H(+). The protein operates within amino-acid biosynthesis; L-proline biosynthesis; L-glutamate 5-semialdehyde from L-glutamate: step 2/2. Catalyzes the NADPH-dependent reduction of L-glutamate 5-phosphate into L-glutamate 5-semialdehyde and phosphate. The product spontaneously undergoes cyclization to form 1-pyrroline-5-carboxylate. The sequence is that of Gamma-glutamyl phosphate reductase from Streptococcus thermophilus.